A 288-amino-acid polypeptide reads, in one-letter code: 33 kDa chaperonin (288 aa).

2 cysteine pairs are disulfide-bonded: cysteine 237/cysteine 239 and cysteine 270/cysteine 273.

The protein belongs to the HSP33 family. In terms of processing, under oxidizing conditions two disulfide bonds are formed involving the reactive cysteines. Under reducing conditions zinc is bound to the reactive cysteines and the protein is inactive.

It is found in the cytoplasm. Its function is as follows. Redox regulated molecular chaperone. Protects both thermally unfolding and oxidatively damaged proteins from irreversible aggregation. Plays an important role in the bacterial defense system toward oxidative stress. In Agathobacter rectalis (strain ATCC 33656 / DSM 3377 / JCM 17463 / KCTC 5835 / VPI 0990) (Eubacterium rectale), this protein is 33 kDa chaperonin.